A 255-amino-acid chain; its full sequence is Triosephosphate isomerase (255 aa).

9 to 11 (NWK) contributes to the substrate binding site. His95 (electrophile) is an active-site residue. Glu167 (proton acceptor) is an active-site residue. Residues Gly173, Ser212, and 233–234 (GG) contribute to the substrate site.

This sequence belongs to the triosephosphate isomerase family. As to quaternary structure, homodimer.

It is found in the cytoplasm. The enzyme catalyses D-glyceraldehyde 3-phosphate = dihydroxyacetone phosphate. It participates in carbohydrate biosynthesis; gluconeogenesis. Its pathway is carbohydrate degradation; glycolysis; D-glyceraldehyde 3-phosphate from glycerone phosphate: step 1/1. Its function is as follows. Involved in the gluconeogenesis. Catalyzes stereospecifically the conversion of dihydroxyacetone phosphate (DHAP) to D-glyceraldehyde-3-phosphate (G3P). The sequence is that of Triosephosphate isomerase from Salmonella agona (strain SL483).